The chain runs to 79 residues: Succinate dehydrogenase assembly factor 1, mitochondrial (79 aa).

Belongs to the complex I LYR family. SDHAF1 subfamily. As to quaternary structure, interacts with sdh2 within an sdh1-sdh2 subcomplex.

The protein resides in the mitochondrion matrix. In terms of biological role, plays an essential role in the assembly of succinate dehydrogenase (SDH), an enzyme complex (also referred to as respiratory complex II) that is a component of both the tricarboxylic acid (TCA) cycle and the mitochondrial electron transport chain, and which couples the oxidation of succinate to fumarate with the reduction of ubiquinone (coenzyme Q) to ubiquinol. Promotes maturation of the iron-sulfur protein subunit sdh2 of the SDH catalytic dimer, protecting it from the deleterious effects of oxidants. May act together with SDHAF3. This Schizosaccharomyces pombe (strain 972 / ATCC 24843) (Fission yeast) protein is Succinate dehydrogenase assembly factor 1, mitochondrial.